We begin with the raw amino-acid sequence, 207 residues long: LexA repressor (207 aa).

The segment at residues 28–48 is a DNA-binding region (H-T-H motif); sequence RAEIAQKLGFKSANAAEEHLK. Residues Ser-124 and Lys-161 each act as for autocatalytic cleavage activity in the active site.

The protein belongs to the peptidase S24 family. Homodimer.

It carries out the reaction Hydrolysis of Ala-|-Gly bond in repressor LexA.. Functionally, represses a number of genes involved in the response to DNA damage (SOS response), including recA and lexA. In the presence of single-stranded DNA, RecA interacts with LexA causing an autocatalytic cleavage which disrupts the DNA-binding part of LexA, leading to derepression of the SOS regulon and eventually DNA repair. This chain is LexA repressor, found in Aeromonas hydrophila subsp. hydrophila (strain ATCC 7966 / DSM 30187 / BCRC 13018 / CCUG 14551 / JCM 1027 / KCTC 2358 / NCIMB 9240 / NCTC 8049).